A 217-amino-acid polypeptide reads, in one-letter code: Peptide methionine sulfoxide reductase MsrA (217 aa).

Residue Cys-56 is part of the active site.

This sequence belongs to the MsrA Met sulfoxide reductase family.

It catalyses the reaction L-methionyl-[protein] + [thioredoxin]-disulfide + H2O = L-methionyl-(S)-S-oxide-[protein] + [thioredoxin]-dithiol. The enzyme catalyses [thioredoxin]-disulfide + L-methionine + H2O = L-methionine (S)-S-oxide + [thioredoxin]-dithiol. Functionally, has an important function as a repair enzyme for proteins that have been inactivated by oxidation. Catalyzes the reversible oxidation-reduction of methionine sulfoxide in proteins to methionine. This is Peptide methionine sulfoxide reductase MsrA from Corynebacterium glutamicum (strain R).